A 661-amino-acid chain; its full sequence is Junctophilin-1 (661 aa).

The Cytoplasmic segment spans residues 1–639 (MTGGRFDFDD…EKEANSGPNS (639 aa)). MORN repeat units lie at residues 14 to 36 (YCGG…KGQG), 38 to 59 (YSGS…SGNT), 60 to 82 (YQGY…KWMY), 106 to 128 (YEGT…DGGT), and 129 to 151 (YQGQ…PYGM). 3 positions are modified to phosphoserine: Ser157, Ser216, and Ser220. Positions 228 to 247 (SKSSISSKRSSVRSDAAMSR) are disordered. MORN repeat units follow at residues 281–303 (YMGE…NGMK) and 304–326 (YEGE…DGSK). The span at 433–454 (DAKENPEEKVPEKPPTPKESPH) shows a compositional bias: basic and acidic residues. The tract at residues 433-631 (DAKENPEEKV…SNDSCPALEK (199 aa)) is disordered. Phosphothreonine is present on Thr448. Phosphoserine is present on Ser452. Residue Thr461 is modified to Phosphothreonine. Phosphoserine is present on residues Ser465, Ser469, and Ser475. Residues 599–613 (VAKESKAEPKAKKSE) are compositionally biased toward basic and acidic residues. A helical; Anchor for type IV membrane protein membrane pass occupies residues 640–660 (IMIVLVMLLNIGLAILFVHFL).

Belongs to the junctophilin family. In terms of tissue distribution, abundantly expressed in skeletal muscle. Very low levels in heart.

Its subcellular location is the cell membrane. The protein resides in the endoplasmic reticulum membrane. It localises to the sarcoplasmic reticulum membrane. Junctophilins contribute to the formation of junctional membrane complexes (JMCs) which link the plasma membrane with the endoplasmic or sarcoplasmic reticulum in excitable cells. Provides a structural foundation for functional cross-talk between the cell surface and intracellular calcium release channels. JPH1 contributes to the construction of the skeletal muscle triad by linking the t-tubule (transverse-tubule) and SR (sarcoplasmic reticulum) membranes. The polypeptide is Junctophilin-1 (JPH1) (Homo sapiens (Human)).